Here is a 111-residue protein sequence, read N- to C-terminus: UPF0235 protein glr3835 (111 aa).

It belongs to the UPF0235 family.

This chain is UPF0235 protein glr3835, found in Gloeobacter violaceus (strain ATCC 29082 / PCC 7421).